Here is a 434-residue protein sequence, read N- to C-terminus: UDP-glucuronate 4-epimerase 2 (434 aa).

2 helical membrane-spanning segments follow: residues serine 32–tyrosine 52 and glycine 91–leucine 111. Serine 93–phenylalanine 124 provides a ligand contact to NAD(+). Tyrosine 243 acts as the Proton acceptor in catalysis.

The protein belongs to the NAD(P)-dependent epimerase/dehydratase family. Homodimer. In terms of tissue distribution, in roots, leaves, siliques, flowers, pollen and stems.

Its subcellular location is the golgi apparatus. It is found in the golgi stack membrane. The catalysed reaction is UDP-alpha-D-glucuronate = UDP-alpha-D-galacturonate. In terms of biological role, involved in the synthesis of the negatively charged monosaccharide that forms the backbone of pectic cell wall components. The chain is UDP-glucuronate 4-epimerase 2 (GAE2) from Arabidopsis thaliana (Mouse-ear cress).